The sequence spans 159 residues: Ribosomal RNA large subunit methyltransferase H (159 aa).

Residues leucine 76, glycine 107, and 126–131 each bind S-adenosyl-L-methionine; that span reads ISSLTL.

Belongs to the RNA methyltransferase RlmH family. As to quaternary structure, homodimer.

Its subcellular location is the cytoplasm. The catalysed reaction is pseudouridine(1915) in 23S rRNA + S-adenosyl-L-methionine = N(3)-methylpseudouridine(1915) in 23S rRNA + S-adenosyl-L-homocysteine + H(+). Specifically methylates the pseudouridine at position 1915 (m3Psi1915) in 23S rRNA. This is Ribosomal RNA large subunit methyltransferase H from Cupriavidus metallidurans (strain ATCC 43123 / DSM 2839 / NBRC 102507 / CH34) (Ralstonia metallidurans).